The sequence spans 350 residues: Secreted effector protein PipB2 (350 aa).

4 consecutive Pentapeptide repeat domains span residues 162-201 (ANLT…NLSG), 202-241 (TSLG…SLLG), 247-286 (CNCS…IMED), and 287-326 (AVLT…TLTH).

Interacts with the host kinesin light chain (KLC), a subunit of the kinesin-1 motor complex.

Its subcellular location is the secreted. It localises to the host membrane. Its function is as follows. Effector proteins function to alter host cell physiology and promote bacterial survival in host tissues. Involved in the reorganization of late endosome/lysosome (LE/Lys) compartments in mammalian cells. Necessary and sufficient to link kinesin-1 onto the Salmonella-containing vacuole (SCV) membrane. Required for centrifugal extension of lysosomal glycoprotein-rich membrane tubules, known as Salmonella-induced filaments (Sifs), away from the SCV and toward the cell periphery. Required for virulence, but not for intracellular survival and replication in phagocytic cells. The chain is Secreted effector protein PipB2 (pipB2) from Salmonella paratyphi A (strain ATCC 9150 / SARB42).